Consider the following 1009-residue polypeptide: Translation initiation factor IF-2 (1009 aa).

A disordered region spans residues 1–415 (MSDENENGRP…EREKEKRRGG (415 aa)). Over residues 94 to 110 (EELRARQRVVDAAREAQ) the composition is skewed to basic and acidic residues. Residues 111–121 (ARQVAEQAAAE) are compositionally biased toward low complexity. Residues 122-136 (ARARAAQEAAQREAA) are compositionally biased toward basic and acidic residues. Residues 137 to 146 (AKAAAERAAA) show a composition bias toward low complexity. A compositionally biased stretch (pro residues) spans 147-174 (APPPVAQAPAAPAPAAPVTPPPAAPQAP). Positions 175-189 (RPVAQAPVAPSAPRQ) are enriched in low complexity. Basic and acidic residues-rich tracts occupy residues 208-218 (EPSRDRRDDRP) and 251-287 (PRPEGDRPRGPRPDGDRPQGDRGGYRGDRPQGDRPQG). A compositionally biased stretch (pro residues) spans 311–320 (GGPPRGPRPG). Basic and acidic residues-rich tracts occupy residues 346 to 358 (MDRRPDEDDDRRK) and 403 to 415 (RAREREKEKRRGG). In terms of domain architecture, tr-type G spans 505–675 (LRPPVVTIMG…LLQAEVLDLK (171 aa)). A G1 region spans residues 514–521 (GHVDHGKT). Position 514–521 (514–521 (GHVDHGKT)) interacts with GTP. Residues 539-543 (GITQH) form a G2 region. Residues 561–564 (DTPG) form a G3 region. Residues 561–565 (DTPGH) and 615–618 (NKMD) each bind GTP. Positions 615 to 618 (NKMD) are G4. The interval 651-653 (SAK) is G5.

The protein belongs to the TRAFAC class translation factor GTPase superfamily. Classic translation factor GTPase family. IF-2 subfamily.

It localises to the cytoplasm. One of the essential components for the initiation of protein synthesis. Protects formylmethionyl-tRNA from spontaneous hydrolysis and promotes its binding to the 30S ribosomal subunits. Also involved in the hydrolysis of GTP during the formation of the 70S ribosomal complex. This chain is Translation initiation factor IF-2, found in Caulobacter vibrioides (strain ATCC 19089 / CIP 103742 / CB 15) (Caulobacter crescentus).